We begin with the raw amino-acid sequence, 1117 residues long: Telomerase reverse transcriptase (1117 aa).

Residues 1–191 form a TEN region; the sequence is MQKINNINNN…VKQKKWYKNN (191 aa). Residues 217–519 are RBD; it reads NQYIYPEIQR…ENLEKVEEKL (303 aa). The Reverse transcriptase domain occupies 517 to 881; it reads EKLIPEDSFQ…NECQWIGKSI (365 aa). Residues 520–887 are RT; it reads IPEDSFQKYP…GKSIDMNTLE (368 aa). A Mg(2+)-binding site is contributed by Asp-618. Residues 638–742 form a TRAP region; the sequence is SDLIQDTYFI…NQDKPRCITK (105 aa). 2 residues coordinate Mg(2+): Asp-815 and Asp-816. Positions 888-1117 are CTE; the sequence is IKSIQKQTQQ…SAKSNQQNTN (230 aa).

This sequence belongs to the reverse transcriptase family. Telomerase subfamily. Component of the telomerase holoenzyme complex, composed of the catalytic core (the catalytic subunit TERT, the telomerase RNA template component TER and TAP65/p65), which is associated with two heterotrimeric subcomplexes: (i) the replication protein A (RPA)-related subcomplex, composed of TEB1, RPA2/TEB2 and RPA3/TEB3 and (ii) the CST-like subcomplex, composed of TAP75/p75, TAP45/p45 and TAP19/p19. TEB1 and the CST-like subcomplex are tethered to the catalytic core by TAP50/p50.

The protein localises to the nucleus. It is found in the chromosome. Its subcellular location is the telomere. The catalysed reaction is DNA(n) + a 2'-deoxyribonucleoside 5'-triphosphate = DNA(n+1) + diphosphate. Catalytic component of telomerase, an essential ribonucleoprotein enzyme that copies new telomeric repeats onto chromosome ends by repetitively synthesizing the short telomere-repeat sequence 5'-TTGGGG-3' using an RNA template component TER. TERT is a reverse transcriptase that adds simple sequence repeats to chromosome ends by copying a template sequence within the RNA component of the enzyme. The sequence is that of Telomerase reverse transcriptase from Tetrahymena thermophila (strain SB210).